Reading from the N-terminus, the 643-residue chain is CCR4-associated factor 4 (643 aa).

The tract at residues 1 to 274 (MGSGDTRGES…AISSLCDVES (274 aa)) is required for interaction with FIS1 and MDV1. The segment at 74–126 (FQNNYADSATTFRILAHLDEQRYPLPNGAAEKNLPSLFEGFKATVSIIQQRLL) is sufficient for interaction with FIS1. Residues 160–255 (DLTHLLEDVE…KQMEEERSSE (96 aa)) are a coiled coil. Over residues 243 to 254 (SLRKQMEEERSS) the composition is skewed to basic and acidic residues. The segment at 243-262 (SLRKQMEEERSSEASSFTQN) is disordered. 7 WD repeats span residues 317–357 (EHGN…QVGE), 360–400 (GHLA…EIYL), 422–461 (LHKDEITALSFDSEALVSGSRDKKIFHWDLTTGKCIQQLD), 479–526 (NNGA…RLLE), 527–566 (GHTDGITSLKFDSEKLVTGSMDNSVRIWDLRTSSILDVIA), 568–603 (DLPVSSLDFDGKLITVGANEGGVNVFNMERDEHWMT), and 614–643 (ELSRRIAIVKYKDGFLINGHNDGDINVWTL).

The protein belongs to the WD repeat MDV1/CAF4 family. Interacts with DNM1, FIS1 and MDV1, components of the mitochondrial fission machinery. Interacts via its WD repeats with DNM1. Interacts with CCR4 and NOT1, components of the CCR4-NOT complex. It is however not a component of the 1.0 MDa CCR4-NOT core complex, but appears to be part of a less characterized, 1.9 MDa CCR4-NOT complex. Interacts with DBF2, another likely component of the 1.9 MDa complex. Interacts with SRB9 and SRB10, components of the SRB8-11 complex.

Its subcellular location is the mitochondrion outer membrane. Functionally, involved in mitochondrial fission. Has a partially redundant function to MDV1 in acting as an adapter protein, binding to FIS1 on the mitochondrial outer membrane and recruiting the dynamin-like GTPase DNM1 to form mitochondrial fission complexes. Plays a key role in determining the polarized localization of those DNM1 clusters that are not immediately involved in the mitochondrial fission process. In Saccharomyces cerevisiae (strain ATCC 204508 / S288c) (Baker's yeast), this protein is CCR4-associated factor 4 (CAF4).